The primary structure comprises 102 residues: NADH-quinone oxidoreductase subunit K (102 aa).

3 consecutive transmembrane segments (helical) span residues 5 to 25 (IAHY…GIFL), 31 to 51 (IIIL…FVAF), and 66 to 86 (FILT…VVFF).

Belongs to the complex I subunit 4L family. In terms of assembly, NDH-1 is composed of 14 different subunits. Subunits NuoA, H, J, K, L, M, N constitute the membrane sector of the complex.

The protein resides in the cell inner membrane. The enzyme catalyses a quinone + NADH + 5 H(+)(in) = a quinol + NAD(+) + 4 H(+)(out). Its function is as follows. NDH-1 shuttles electrons from NADH, via FMN and iron-sulfur (Fe-S) centers, to quinones in the respiratory chain. The immediate electron acceptor for the enzyme in this species is believed to be ubiquinone. Couples the redox reaction to proton translocation (for every two electrons transferred, four hydrogen ions are translocated across the cytoplasmic membrane), and thus conserves the redox energy in a proton gradient. The sequence is that of NADH-quinone oxidoreductase subunit K from Bartonella bacilliformis (strain ATCC 35685 / KC583 / Herrer 020/F12,63).